The sequence spans 406 residues: O-succinylhomoserine sulfhydrylase (406 aa).

An N6-(pyridoxal phosphate)lysine modification is found at Lys-219.

This sequence belongs to the trans-sulfuration enzymes family. MetZ subfamily. Homotetramer. It depends on pyridoxal 5'-phosphate as a cofactor.

The catalysed reaction is O-succinyl-L-homoserine + hydrogen sulfide = L-homocysteine + succinate. It functions in the pathway amino-acid biosynthesis; L-methionine biosynthesis via de novo pathway; L-homocysteine from O-succinyl-L-homoserine: step 1/1. In terms of biological role, catalyzes the formation of L-homocysteine from O-succinyl-L-homoserine (OSHS) and hydrogen sulfide. This Mycobacterium tuberculosis (strain CDC 1551 / Oshkosh) protein is O-succinylhomoserine sulfhydrylase.